The sequence spans 145 residues: Endoribonuclease YbeY (145 aa).

Residues H109, H113, and H119 each contribute to the Zn(2+) site.

Belongs to the endoribonuclease YbeY family. Zn(2+) serves as cofactor.

It localises to the cytoplasm. Single strand-specific metallo-endoribonuclease involved in late-stage 70S ribosome quality control and in maturation of the 3' terminus of the 16S rRNA. The polypeptide is Endoribonuclease YbeY (Vesicomyosocius okutanii subsp. Calyptogena okutanii (strain HA)).